A 160-amino-acid chain; its full sequence is Transcription elongation factor GreA (160 aa).

Residues 1–72 are a coiled coil; the sequence is MAEKTYPMTL…QISSLETKIR (72 aa).

It belongs to the GreA/GreB family.

In terms of biological role, necessary for efficient RNA polymerase transcription elongation past template-encoded arresting sites. The arresting sites in DNA have the property of trapping a certain fraction of elongating RNA polymerases that pass through, resulting in locked ternary complexes. Cleavage of the nascent transcript by cleavage factors such as GreA or GreB allows the resumption of elongation from the new 3'terminus. GreA releases sequences of 2 to 3 nucleotides. This chain is Transcription elongation factor GreA, found in Streptococcus gordonii (strain Challis / ATCC 35105 / BCRC 15272 / CH1 / DL1 / V288).